The primary structure comprises 347 residues: Bifunctional methylenetetrahydrofolate dehydrogenase/cyclohydrolase 2, mitochondrial (347 aa).

Residues 98-102 (YVRNK) and 145-147 (VQL) contribute to the substrate site. Residues 214–216 (GRS) and arginine 247 each bind NAD(+). Residue 323 to 327 (PGGVG) coordinates substrate.

It belongs to the tetrahydrofolate dehydrogenase/cyclohydrolase family. The cofactor is Mg(2+).

It localises to the mitochondrion inner membrane. It catalyses the reaction (6R)-5,10-methylene-5,6,7,8-tetrahydrofolate + NAD(+) = (6R)-5,10-methenyltetrahydrofolate + NADH. It carries out the reaction (6R)-5,10-methenyltetrahydrofolate + H2O = (6R)-10-formyltetrahydrofolate + H(+). The catalysed reaction is (6R)-5,10-methylene-5,6,7,8-tetrahydrofolate + NADP(+) = (6R)-5,10-methenyltetrahydrofolate + NADPH. It participates in one-carbon metabolism; tetrahydrofolate interconversion. Functionally, bifunctional mitochondrial folate-interconverting enzyme that has both NAD/NADP-dependent methylenetetrahydrofolate dehydrogenase and methenyltetrahydrofolate cyclohydrolase activities. This Callithrix jacchus (White-tufted-ear marmoset) protein is Bifunctional methylenetetrahydrofolate dehydrogenase/cyclohydrolase 2, mitochondrial.